We begin with the raw amino-acid sequence, 496 residues long: Probable glycine betaine transporter (496 aa).

Helical transmembrane passes span 11–31 (TVLY…VFLP), 49–69 (FGWL…GIAI), 89–109 (FQWF…FWSV), 136–156 (VVFF…GLAL), 188–208 (AIDI…LGLG), 219–239 (IWGI…ITVI), 260–280 (VWLS…VFIL), 306–326 (WVGG…PFVG), 341–361 (FVFA…AIYG), 396–416 (LYAI…VGAA), 441–461 (FWGI…GTAA), and 468–488 (ASIA…YSIL).

This sequence belongs to the BCCT transporter (TC 2.A.15) family.

The protein resides in the cell membrane. Functionally, probably acts in the uptake of glycine betaine. May function in the pathway that allows anaerobic methylotrophic growth of D.hafniense using glycine betaine. In Desulfitobacterium hafniense (strain Y51), this protein is Probable glycine betaine transporter.